A 200-amino-acid chain; its full sequence is ATP-dependent Clp protease proteolytic subunit (200 aa).

The Nucleophile role is filled by Ser98. His123 is a catalytic residue.

It belongs to the peptidase S14 family. In terms of assembly, fourteen ClpP subunits assemble into 2 heptameric rings which stack back to back to give a disk-like structure with a central cavity, resembling the structure of eukaryotic proteasomes.

The protein localises to the cytoplasm. The catalysed reaction is Hydrolysis of proteins to small peptides in the presence of ATP and magnesium. alpha-casein is the usual test substrate. In the absence of ATP, only oligopeptides shorter than five residues are hydrolyzed (such as succinyl-Leu-Tyr-|-NHMec, and Leu-Tyr-Leu-|-Tyr-Trp, in which cleavage of the -Tyr-|-Leu- and -Tyr-|-Trp bonds also occurs).. In terms of biological role, cleaves peptides in various proteins in a process that requires ATP hydrolysis. Has a chymotrypsin-like activity. Plays a major role in the degradation of misfolded proteins. In Ehrlichia canis (strain Jake), this protein is ATP-dependent Clp protease proteolytic subunit.